The sequence spans 280 residues: Nucleotide-binding protein CV_3336 (280 aa).

8 to 15 contacts ATP; sequence GLSGSGKS. 57–60 contacts GTP; sequence DTRS.

The protein belongs to the RapZ-like family.

Displays ATPase and GTPase activities. The chain is Nucleotide-binding protein CV_3336 from Chromobacterium violaceum (strain ATCC 12472 / DSM 30191 / JCM 1249 / CCUG 213 / NBRC 12614 / NCIMB 9131 / NCTC 9757 / MK).